We begin with the raw amino-acid sequence, 173 residues long: uncharacterized protein (173 aa).

In terms of domain architecture, MSP spans 16–133 (DLVLRPETIT…KHVLIRFPNK (118 aa)). Residues 141–163 (KKMEEDDMKQQKERNKLSNEKMG) are compositionally biased toward basic and acidic residues. Positions 141–173 (KKMEEDDMKQQKERNKLSNEKMGIRNQNMGEKK) are disordered.

This is an uncharacterized protein from Caenorhabditis elegans.